A 533-amino-acid polypeptide reads, in one-letter code: Probable RNA-binding protein 46 (533 aa).

RRM domains lie at 61-139 (CEVF…VSLD), 141-223 (CRLF…WADP), and 236-308 (KVLY…LAKP). Residues 338–362 (ESHSKSLGKPPTLPTRLNGQHSPSP) are disordered.

As to quaternary structure, interacts with YTHDC2, MEIOC, MOV10, CNOT6L, DDX4, UPF1 and PABPC1. In terms of tissue distribution, expressed in the testis and ovary (at protein level). Expressed in spermatogonia and spermatocytes in testis (at protein level).

The protein localises to the cytoplasm. Essential for male and female fertility, playing a crucial role in regulating germ cell development by ensuring the proper progression of meiosis prophase I. Regulates mitotic-to-meiotic transition in spermatogenesis by forming a complex with MEIOC and YTHDC2 which recognizes and down-regulates mitotic transcripts for a successful meiotic entry. Required for normal synaptonemal complex formation during meiosis, binding meiotic cohesin subunit mRNAs containing GCCUAU/GUUCGA motifs in their 3'UTRs regions and positively regulating their translation. Required for spermatogonial differentiation in both developing and adult testis. The chain is Probable RNA-binding protein 46 from Mus musculus (Mouse).